Here is a 72-residue protein sequence, read N- to C-terminus: Conotoxin TxMMSK-04 (72 aa).

Positions 1–20 (MMSKLGVLLTICLLLFPLTA) are cleaved as a signal peptide. Residues 21 to 51 (VPLDGDQPADRPAERMQDGISSEHHPFFDSV) constitute a propeptide that is removed on maturation. The residue at position 55 (Q55) is a Pyrrolidone carboxylic acid. Disulfide bonds link C57-C71, C58-C67, and C63-C70. P69 is modified (4-hydroxyproline). Position 71 is a cysteine amide (C71).

The protein belongs to the conotoxin M superfamily. In terms of tissue distribution, expressed by the venom duct.

Its subcellular location is the secreted. This Conus textile (Cloth-of-gold cone) protein is Conotoxin TxMMSK-04.